The sequence spans 450 residues: Phosphoglucosamine mutase 2 (450 aa).

The Phosphoserine intermediate role is filled by S101. Positions 101, 245, 247, and 249 each coordinate Mg(2+). S101 carries the post-translational modification Phosphoserine.

It belongs to the phosphohexose mutase family. Requires Mg(2+) as cofactor. In terms of processing, activated by phosphorylation.

The enzyme catalyses alpha-D-glucosamine 1-phosphate = D-glucosamine 6-phosphate. Catalyzes the conversion of glucosamine-6-phosphate to glucosamine-1-phosphate. The protein is Phosphoglucosamine mutase 2 of Shewanella sp. (strain MR-4).